Reading from the N-terminus, the 875-residue chain is Probable ubiquitin carboxyl-terminal hydrolase 7 (875 aa).

The UBP-type zinc-finger motif lies at 54–167 (KECSHLKKGV…RDVQQFICSN (114 aa)). Positions 56, 58, 83, 86, 101, 104, 109, 116, 120, 127, 140, and 143 each coordinate Zn(2+). The USP domain maps to 208 to 875 (PGLKNLGATC…EAYMLFYERV (668 aa)). The active-site Nucleophile is C217. Phosphoserine occurs at positions 333 and 337. Residues 396–486 (YSKELSQSSD…ASPKKEVLKS (91 aa)) form a disordered region. Low complexity predominate over residues 401 to 438 (SQSSDSSQHQHDSFLPANSSPLAASSTKSLPSSELLDS). A compositionally biased stretch (basic and acidic residues) spans 473-484 (NHEEASPKKEVL). Residues S486 and S493 each carry the phosphoserine modification. Over residues 575–586 (RSRFSRSPKKSS) the composition is skewed to basic residues. Positions 575–628 (RSRFSRSPKKSSVKIVVDNANDDTDQAPTTNSSSLNENLLGGHASENDKSLKQS) are disordered. Residues 600 to 611 (QAPTTNSSSLNE) are compositionally biased toward polar residues. S645 is subject to Phosphoserine. H812 serves as the catalytic Proton acceptor.

Belongs to the peptidase C19 family.

It carries out the reaction Thiol-dependent hydrolysis of ester, thioester, amide, peptide and isopeptide bonds formed by the C-terminal Gly of ubiquitin (a 76-residue protein attached to proteins as an intracellular targeting signal).. In Schizosaccharomyces pombe (strain 972 / ATCC 24843) (Fission yeast), this protein is Probable ubiquitin carboxyl-terminal hydrolase 7 (ubp7).